A 217-amino-acid polypeptide reads, in one-letter code: Imidazole glycerol phosphate synthase subunit HisH (217 aa).

The Glutamine amidotransferase type-1 domain occupies 5–217 (RVGIINYGVG…LRLLANFLTL (213 aa)). Residue C93 is the Nucleophile of the active site. Catalysis depends on residues H199 and E201.

Heterodimer of HisH and HisF.

The protein localises to the cytoplasm. It carries out the reaction 5-[(5-phospho-1-deoxy-D-ribulos-1-ylimino)methylamino]-1-(5-phospho-beta-D-ribosyl)imidazole-4-carboxamide + L-glutamine = D-erythro-1-(imidazol-4-yl)glycerol 3-phosphate + 5-amino-1-(5-phospho-beta-D-ribosyl)imidazole-4-carboxamide + L-glutamate + H(+). The enzyme catalyses L-glutamine + H2O = L-glutamate + NH4(+). The protein operates within amino-acid biosynthesis; L-histidine biosynthesis; L-histidine from 5-phospho-alpha-D-ribose 1-diphosphate: step 5/9. Functionally, IGPS catalyzes the conversion of PRFAR and glutamine to IGP, AICAR and glutamate. The HisH subunit catalyzes the hydrolysis of glutamine to glutamate and ammonia as part of the synthesis of IGP and AICAR. The resulting ammonia molecule is channeled to the active site of HisF. In Helicobacter hepaticus (strain ATCC 51449 / 3B1), this protein is Imidazole glycerol phosphate synthase subunit HisH.